The chain runs to 247 residues: Caffeoyl-CoA O-methyltransferase 1 (247 aa).

Position 21 (lysine 21) interacts with substrate. S-adenosyl-L-methionine-binding positions include threonine 63, glutamate 85, 87–88 (GV), serine 93, aspartate 111, and alanine 140. Position 163 (aspartate 163) interacts with substrate. Aspartate 163 is a binding site for a divalent metal cation. An S-adenosyl-L-methionine-binding site is contributed by aspartate 165. Positions 189 and 190 each coordinate a divalent metal cation. Asparagine 194 serves as a coordination point for substrate.

Belongs to the class I-like SAM-binding methyltransferase superfamily. Cation-dependent O-methyltransferase family. CCoAMT subfamily. It depends on a divalent metal cation as a cofactor.

It catalyses the reaction (E)-caffeoyl-CoA + S-adenosyl-L-methionine = (E)-feruloyl-CoA + S-adenosyl-L-homocysteine + H(+). It functions in the pathway aromatic compound metabolism; phenylpropanoid biosynthesis. Its function is as follows. Methylates caffeoyl-CoA to feruloyl-CoA and 5-hydroxyferuloyl-CoA to sinapoyl-CoA. Plays a role in the synthesis of feruloylated polysaccharides. Involved in the reinforcement of the plant cell wall. Also involved in the responding to wounding or pathogen challenge by the increased formation of cell wall-bound ferulic acid polymers. This Populus trichocarpa (Western balsam poplar) protein is Caffeoyl-CoA O-methyltransferase 1 (CCOAOMT1).